A 159-amino-acid chain; its full sequence is Insertion element IS136 uncharacterized 16.9 kDa protein (159 aa).

A compositionally biased stretch (low complexity) spans 126 to 142 (RSFVSPSSSTPSTARSS). A disordered region spans residues 126–159 (RSFVSPSSSTPSTARSSPGRPLPMQAFPAQTCAT).

This is Insertion element IS136 uncharacterized 16.9 kDa protein from Agrobacterium tumefaciens (strain T37).